A 204-amino-acid polypeptide reads, in one-letter code: FMN-dependent NADH:quinone oxidoreductase (204 aa).

Residues serine 9, 15–17 (SVS), 95–98 (MYNF), and 139–142 (SRGG) each bind FMN.

This sequence belongs to the azoreductase type 1 family. As to quaternary structure, homodimer. It depends on FMN as a cofactor.

The catalysed reaction is 2 a quinone + NADH + H(+) = 2 a 1,4-benzosemiquinone + NAD(+). The enzyme catalyses N,N-dimethyl-1,4-phenylenediamine + anthranilate + 2 NAD(+) = 2-(4-dimethylaminophenyl)diazenylbenzoate + 2 NADH + 2 H(+). Quinone reductase that provides resistance to thiol-specific stress caused by electrophilic quinones. Functionally, also exhibits azoreductase activity. Catalyzes the reductive cleavage of the azo bond in aromatic azo compounds to the corresponding amines. The chain is FMN-dependent NADH:quinone oxidoreductase from Methylocella silvestris (strain DSM 15510 / CIP 108128 / LMG 27833 / NCIMB 13906 / BL2).